The following is a 338-amino-acid chain: Glycerol-3-phosphate dehydrogenase [NAD(P)+] (338 aa).

NADPH contacts are provided by serine 14, tyrosine 15, histidine 35, and lysine 109. 3 residues coordinate sn-glycerol 3-phosphate: lysine 109, glycine 138, and threonine 140. Alanine 142 serves as a coordination point for NADPH. Sn-glycerol 3-phosphate is bound by residues lysine 194, aspartate 247, serine 257, arginine 258, and asparagine 259. Catalysis depends on lysine 194, which acts as the Proton acceptor. Arginine 258 serves as a coordination point for NADPH. Valine 282 and glutamate 284 together coordinate NADPH.

The protein belongs to the NAD-dependent glycerol-3-phosphate dehydrogenase family.

The protein localises to the cytoplasm. It carries out the reaction sn-glycerol 3-phosphate + NAD(+) = dihydroxyacetone phosphate + NADH + H(+). It catalyses the reaction sn-glycerol 3-phosphate + NADP(+) = dihydroxyacetone phosphate + NADPH + H(+). Its pathway is membrane lipid metabolism; glycerophospholipid metabolism. Functionally, catalyzes the reduction of the glycolytic intermediate dihydroxyacetone phosphate (DHAP) to sn-glycerol 3-phosphate (G3P), the key precursor for phospholipid synthesis. In Sodalis glossinidius (strain morsitans), this protein is Glycerol-3-phosphate dehydrogenase [NAD(P)+].